Here is a 116-residue protein sequence, read N- to C-terminus: Large ribosomal subunit protein uL18 (116 aa).

It belongs to the universal ribosomal protein uL18 family. Part of the 50S ribosomal subunit; part of the 5S rRNA/L5/L18/L25 subcomplex. Contacts the 5S and 23S rRNAs.

Functionally, this is one of the proteins that bind and probably mediate the attachment of the 5S RNA into the large ribosomal subunit, where it forms part of the central protuberance. The protein is Large ribosomal subunit protein uL18 of Cellvibrio japonicus (strain Ueda107) (Pseudomonas fluorescens subsp. cellulosa).